Here is a 389-residue protein sequence, read N- to C-terminus: MSEVTTQSKPERRKRQKLEDMEGYKPSIYGLTRDELIDWAVEHGEKKFRATQIWDWLYKKRVQSFEEMTNISKDFIAKLNDNFCVNPLKQRIVQESKDGTVKYLFELPDGMLIETVLMRQHYGLSVCVTTQVGCNIGCTFCASGLIKKQRDLTAGEIVAQIMLVQKYFDDRGDGERVSHVVVMGIGEPFDNYDNVLRFLRTINNDNGLAIGARHITVSTSGLAPKIKEFANEGVQVNLAVSLHAPNNDLRSSIMRINRSFPLEKLFEAIEYYIQTTNRRVTFEYIMLNEVNDHPENAQELADLTKKIRKLSYINLIPYNPVSEHDHYSRSTKERVAAFYDVLKKNGVNCVVRQEHGTDIDAACGQLRSNTMKRDRQKAVAEASGKSEGK.

The active-site Proton acceptor is the Glu-114. One can recognise a Radical SAM core domain in the interval 120-358 (QHYGLSVCVT…CVVRQEHGTD (239 aa)). Cys-127 and Cys-363 are oxidised to a cystine. [4Fe-4S] cluster-binding residues include Cys-134, Cys-138, and Cys-141. Residues 186–187 (GE), Ser-218, 241–243 (SLH), and Asn-319 contribute to the S-adenosyl-L-methionine site. Residue Cys-363 is the S-methylcysteine intermediate of the active site. The disordered stretch occupies residues 370 to 389 (TMKRDRQKAVAEASGKSEGK). Over residues 371–389 (MKRDRQKAVAEASGKSEGK) the composition is skewed to basic and acidic residues.

The protein belongs to the radical SAM superfamily. RlmN family. The cofactor is [4Fe-4S] cluster.

It is found in the cytoplasm. It catalyses the reaction adenosine(2503) in 23S rRNA + 2 reduced [2Fe-2S]-[ferredoxin] + 2 S-adenosyl-L-methionine = 2-methyladenosine(2503) in 23S rRNA + 5'-deoxyadenosine + L-methionine + 2 oxidized [2Fe-2S]-[ferredoxin] + S-adenosyl-L-homocysteine. The enzyme catalyses adenosine(37) in tRNA + 2 reduced [2Fe-2S]-[ferredoxin] + 2 S-adenosyl-L-methionine = 2-methyladenosine(37) in tRNA + 5'-deoxyadenosine + L-methionine + 2 oxidized [2Fe-2S]-[ferredoxin] + S-adenosyl-L-homocysteine. Its function is as follows. Specifically methylates position 2 of adenine 2503 in 23S rRNA and position 2 of adenine 37 in tRNAs. The polypeptide is Probable dual-specificity RNA methyltransferase RlmN (Streptococcus thermophilus (strain CNRZ 1066)).